A 233-amino-acid chain; its full sequence is Ribosomal RNA small subunit methyltransferase G (233 aa).

Residues Gly-96, Leu-101, 146-147, and Arg-160 contribute to the S-adenosyl-L-methionine site; that span reads LE.

The protein belongs to the methyltransferase superfamily. RNA methyltransferase RsmG family.

The protein resides in the cytoplasm. The enzyme catalyses guanosine(527) in 16S rRNA + S-adenosyl-L-methionine = N(7)-methylguanosine(527) in 16S rRNA + S-adenosyl-L-homocysteine. In terms of biological role, specifically methylates the N7 position of guanine in position 527 of 16S rRNA. The polypeptide is Ribosomal RNA small subunit methyltransferase G (Sphingopyxis alaskensis (strain DSM 13593 / LMG 18877 / RB2256) (Sphingomonas alaskensis)).